A 1211-amino-acid polypeptide reads, in one-letter code: Diacylglycerol kinase eta (1211 aa).

The interval 1–66 (MAGAGSQHHP…QMRTKTSIKE (66 aa)) is disordered. A compositionally biased stretch (low complexity) spans 19 to 32 (AGASAVSPTAAGPG). Positions 52–61 (VSTSGQMRTK) are enriched in polar residues. The region spanning 62-155 (TSIKEGQLLK…WISSLKSVQS (94 aa)) is the PH domain. 2 consecutive Phorbol-ester/DAG-type zinc fingers follow at residues 172 to 222 (MHNW…TNNC) and 244 to 295 (PHQW…HPVC). A DAGKc domain is found at 325–460 (FCVSPLLVFV…LDRWSIMTYE (136 aa)). Disordered stretches follow at residues 562–613 (SQAS…KPRE) and 634–694 (KVMD…SVAG). Composition is skewed to acidic residues over residues 576 to 589 (PEED…DESL) and 653 to 662 (YDTETDEAKE). The segment covering 670–691 (SAKTTSQSPDAQASCGHPQTDS) has biased composition (polar residues). Positions 1143 to 1206 (WGTEEVAAWL…LQGIKELERN (64 aa)) constitute an SAM domain.

The protein belongs to the eukaryotic diacylglycerol kinase family. In terms of assembly, interacts with RAF1 and BRAF. As to quaternary structure, homooligomers. Heterooligomers. Oligomerization through the SAM domain inhibits the diacylglycerol kinase activity. Heterooligomerizes with SAM domain-containing isoforms of DGKD. Does not form homooligomers. Phosphorylated. Phosphorylation does not inhibit catalytic activity. As to expression, widely expressed. Detected in the granulosa cells of the primary and secondary follicles. Expressed in mature follicles and corpus lutea. Expressed in the oviductal epithelium. In the uterus, strongly expressed in the luminal epithelium. Detected in the uterine glands. Detected in ovary and uterus (at protein level). In terms of tissue distribution, specifically expressed in testis. Detected in the inner area of the testis. Strongly expressed in the secondary spermatocytes and the round spermatids and weakly detected in the primary spermatocytes.

Its subcellular location is the cytoplasm. It is found in the cell membrane. It localises to the cytoskeleton. The enzyme catalyses a 1,2-diacyl-sn-glycerol + ATP = a 1,2-diacyl-sn-glycero-3-phosphate + ADP + H(+). The catalysed reaction is 1,2-di-(9Z-octadecenoyl)-sn-glycerol + ATP = 1,2-di-(9Z-octadecenoyl)-sn-glycero-3-phosphate + ADP + H(+). Its pathway is lipid metabolism; glycerolipid metabolism. Diacylglycerol kinase that converts diacylglycerol/DAG into phosphatidic acid/phosphatidate/PA and regulates the respective levels of these two bioactive lipids. Thereby, acts as a central switch between the signaling pathways activated by these second messengers with different cellular targets and opposite effects in numerous biological processes. Plays a key role in promoting cell growth. Activates the Ras/B-Raf/C-Raf/MEK/ERK signaling pathway induced by EGF. Regulates the recruitment of RAF1 and BRAF from cytoplasm to membranes and their heterodimerization. This is Diacylglycerol kinase eta from Mus musculus (Mouse).